Reading from the N-terminus, the 179-residue chain is Large ribosomal subunit protein uL5 (179 aa).

This sequence belongs to the universal ribosomal protein uL5 family. As to quaternary structure, part of the 50S ribosomal subunit; part of the 5S rRNA/L5/L18/L25 subcomplex. Contacts the 5S rRNA and the P site tRNA. Forms a bridge to the 30S subunit in the 70S ribosome.

In terms of biological role, this is one of the proteins that bind and probably mediate the attachment of the 5S RNA into the large ribosomal subunit, where it forms part of the central protuberance. In the 70S ribosome it contacts protein S13 of the 30S subunit (bridge B1b), connecting the 2 subunits; this bridge is implicated in subunit movement. Contacts the P site tRNA; the 5S rRNA and some of its associated proteins might help stabilize positioning of ribosome-bound tRNAs. The sequence is that of Large ribosomal subunit protein uL5 from Burkholderia mallei (strain ATCC 23344).